The chain runs to 78 residues: Small ribosomal subunit protein bS18 (78 aa).

This sequence belongs to the bacterial ribosomal protein bS18 family. In terms of assembly, part of the 30S ribosomal subunit. Forms a tight heterodimer with protein bS6.

Binds as a heterodimer with protein bS6 to the central domain of the 16S rRNA, where it helps stabilize the platform of the 30S subunit. The protein is Small ribosomal subunit protein bS18 of Ligilactobacillus salivarius (strain UCC118) (Lactobacillus salivarius).